We begin with the raw amino-acid sequence, 85 residues long: DNA-directed RNA polymerase subunit Rpo11 (85 aa).

The protein belongs to the archaeal Rpo11/eukaryotic RPB11/RPC19 RNA polymerase subunit family. In terms of assembly, part of the RNA polymerase complex.

It localises to the cytoplasm. The catalysed reaction is RNA(n) + a ribonucleoside 5'-triphosphate = RNA(n+1) + diphosphate. In terms of biological role, DNA-dependent RNA polymerase (RNAP) catalyzes the transcription of DNA into RNA using the four ribonucleoside triphosphates as substrates. The chain is DNA-directed RNA polymerase subunit Rpo11 from Methanothermobacter thermautotrophicus (strain ATCC 29096 / DSM 1053 / JCM 10044 / NBRC 100330 / Delta H) (Methanobacterium thermoautotrophicum).